A 115-amino-acid polypeptide reads, in one-letter code: Large ribosomal subunit protein bL19 (115 aa).

It belongs to the bacterial ribosomal protein bL19 family.

Its function is as follows. This protein is located at the 30S-50S ribosomal subunit interface and may play a role in the structure and function of the aminoacyl-tRNA binding site. The chain is Large ribosomal subunit protein bL19 from Erwinia tasmaniensis (strain DSM 17950 / CFBP 7177 / CIP 109463 / NCPPB 4357 / Et1/99).